Reading from the N-terminus, the 160-residue chain is Large ribosomal subunit protein uL10 (160 aa).

The protein belongs to the universal ribosomal protein uL10 family. Part of the ribosomal stalk of the 50S ribosomal subunit. The N-terminus interacts with L11 and the large rRNA to form the base of the stalk. The C-terminus forms an elongated spine to which L12 dimers bind in a sequential fashion forming a multimeric L10(L12)X complex.

Its function is as follows. Forms part of the ribosomal stalk, playing a central role in the interaction of the ribosome with GTP-bound translation factors. This Wolinella succinogenes (strain ATCC 29543 / DSM 1740 / CCUG 13145 / JCM 31913 / LMG 7466 / NCTC 11488 / FDC 602W) (Vibrio succinogenes) protein is Large ribosomal subunit protein uL10.